We begin with the raw amino-acid sequence, 806 residues long: Enhancer of polycomb-like protein 1 (806 aa).

2 disordered regions span residues 403 to 461 (AITS…QEIG) and 751 to 806 (SLQQ…NAAA). Over residues 411–420 (KRAKSSKSSK) the composition is skewed to basic residues. Over residues 421–439 (LHKEDSGLYADEKGSEPKK) the composition is skewed to basic and acidic residues. Over residues 751–779 (SLQQQQMLQKGQQPINNAPHSQSSSPPSH) the composition is skewed to low complexity. A compositionally biased stretch (polar residues) spans 785–795 (NPGSTPNQSSP).

This sequence belongs to the enhancer of polycomb family. As to quaternary structure, component of the NuA4 histone acetyltransferase complex.

It localises to the nucleus. Its function is as follows. Component of the NuA4 histone acetyltransferase complex which is involved in transcriptional activation of selected genes principally by acetylation of nucleosomal histone H4 and H2A. The NuA4 complex is also involved in DNA repair. Involved in gene silencing by neighboring heterochromatin, blockage of the silencing spreading along the chromosome, and required for cell cycle progression through G2/M. The sequence is that of Enhancer of polycomb-like protein 1 (EPL1) from Kluyveromyces lactis (strain ATCC 8585 / CBS 2359 / DSM 70799 / NBRC 1267 / NRRL Y-1140 / WM37) (Yeast).